Here is a 121-residue protein sequence, read N- to C-terminus: Small ribosomal subunit protein uS13 (121 aa).

Positions 91–121 (HRMSLPVRGQRTRTNARTRRGSRKTVAGRKK) are disordered. Over residues 100 to 121 (QRTRTNARTRRGSRKTVAGRKK) the composition is skewed to basic residues.

It belongs to the universal ribosomal protein uS13 family. Part of the 30S ribosomal subunit. Forms a loose heterodimer with protein S19. Forms two bridges to the 50S subunit in the 70S ribosome.

In terms of biological role, located at the top of the head of the 30S subunit, it contacts several helices of the 16S rRNA. In the 70S ribosome it contacts the 23S rRNA (bridge B1a) and protein L5 of the 50S subunit (bridge B1b), connecting the 2 subunits; these bridges are implicated in subunit movement. Contacts the tRNAs in the A and P-sites. The polypeptide is Small ribosomal subunit protein uS13 (Prochlorococcus marinus (strain AS9601)).